A 350-amino-acid polypeptide reads, in one-letter code: Fe(2+) transport protein 2 (350 aa).

Residues Met1–Ala21 form the signal peptide. Topologically, residues Ile22–Lys47 are extracellular. A helical membrane pass occupies residues Ile48–Ser68. Residues Arg69–Gly80 are Cytoplasmic-facing. Residues Phe81–Leu101 traverse the membrane as a helical segment. The Extracellular portion of the chain corresponds to Pro102–Lys120. Residues Phe121 to Ile141 traverse the membrane as a helical segment. Residues Thr142–Gln195 are Cytoplasmic-facing. A helical membrane pass occupies residues Val196–Leu216. The Extracellular portion of the chain corresponds to Gly217 to Gly227. A helical membrane pass occupies residues Leu228–Leu248. Residues Gln249–Lys257 are Cytoplasmic-facing. The helical transmembrane segment at Phe258–Leu278 threads the bilayer. At Ser279–Ala289 the chain is on the extracellular side. Residues Leu290–Val310 traverse the membrane as a helical segment. Topologically, residues Asp311–Gln329 are cytoplasmic. A helical membrane pass occupies residues Ile330–Ala350.

The protein belongs to the ZIP transporter (TC 2.A.5) family. As to expression, expressed in the external cell layers of the root subapical zone.

It is found in the cell membrane. Functionally, high-affinity iron transporter that mediates under iron-deficiency the iron uptake from the rhizosphere across the plasma membrane in the root epidermal layer. Could also be capable of transporting zinc ions. The polypeptide is Fe(2+) transport protein 2 (IRT2) (Arabidopsis thaliana (Mouse-ear cress)).